Reading from the N-terminus, the 236-residue chain is Pyridoxine 5'-phosphate synthase (236 aa).

Residue Asn6 participates in 3-amino-2-oxopropyl phosphate binding. Position 8–9 (8–9 (DH)) interacts with 1-deoxy-D-xylulose 5-phosphate. Arg17 contributes to the 3-amino-2-oxopropyl phosphate binding site. The active-site Proton acceptor is His42. The 1-deoxy-D-xylulose 5-phosphate site is built by Arg44 and His49. Glu69 functions as the Proton acceptor in the catalytic mechanism. 1-deoxy-D-xylulose 5-phosphate is bound at residue Thr99. His190 (proton donor) is an active-site residue. Residues Gly191 and 212-213 (GH) each bind 3-amino-2-oxopropyl phosphate.

The protein belongs to the PNP synthase family. As to quaternary structure, homooctamer; tetramer of dimers.

It is found in the cytoplasm. The catalysed reaction is 3-amino-2-oxopropyl phosphate + 1-deoxy-D-xylulose 5-phosphate = pyridoxine 5'-phosphate + phosphate + 2 H2O + H(+). The protein operates within cofactor biosynthesis; pyridoxine 5'-phosphate biosynthesis; pyridoxine 5'-phosphate from D-erythrose 4-phosphate: step 5/5. Functionally, catalyzes the complicated ring closure reaction between the two acyclic compounds 1-deoxy-D-xylulose-5-phosphate (DXP) and 3-amino-2-oxopropyl phosphate (1-amino-acetone-3-phosphate or AAP) to form pyridoxine 5'-phosphate (PNP) and inorganic phosphate. The sequence is that of Pyridoxine 5'-phosphate synthase from Chloroherpeton thalassium (strain ATCC 35110 / GB-78).